The chain runs to 495 residues: MTEKPTIAFAKFAAPKKGSVILLVPEGGNLGQAATAADPAGVMPKVFAAAEFKGKLAATVEALAPQGTAYDRVAVIGTGNPSALTEQSWLQIGGAAAAAAKNAGEVTVIADVAGLELSAREAANIGLGILLRSYVFDKYKTRRDENGIKARDKKFTIQCADPNAAKKAFAEASALGDGVYLARDLVNEPANVLGPVEFAAQAKALESLGVKVDVLTEREMKKLGMGALLGVAQGSVRPPRLVVMQWNGGKPKQKPVAFVGKGVVFDTGGISIKPAASMEDMKGDMAGAAAVVGLMHALAARKAKTNAVGIIGLVENMPDGNAQRPGDIVTSMSGQTIEIINTDAEGRLVLADALWYCKEQFKPQFMVNLATLTGAIIVALGNSHAGLFSNDDTLSERLTAAGQATGEKVWRMPLGSEYDKLIDTKNADMKNTGGRQAGSITAAQFLKRFVDDTPWAHLDVAGTAMGSPSSEINQSWASGFGVRLLDRLVADHYEG.

Mn(2+) is bound by residues Lys261 and Asp266. Lys273 is an active-site residue. Mn(2+) is bound by residues Asp284, Asp343, and Glu345. Arg347 is an active-site residue.

It belongs to the peptidase M17 family. Mn(2+) is required as a cofactor.

It localises to the cytoplasm. It carries out the reaction Release of an N-terminal amino acid, Xaa-|-Yaa-, in which Xaa is preferably Leu, but may be other amino acids including Pro although not Arg or Lys, and Yaa may be Pro. Amino acid amides and methyl esters are also readily hydrolyzed, but rates on arylamides are exceedingly low.. The catalysed reaction is Release of an N-terminal amino acid, preferentially leucine, but not glutamic or aspartic acids.. Its function is as follows. Presumably involved in the processing and regular turnover of intracellular proteins. Catalyzes the removal of unsubstituted N-terminal amino acids from various peptides. This Chelativorans sp. (strain BNC1) protein is Probable cytosol aminopeptidase.